A 418-amino-acid polypeptide reads, in one-letter code: Serine hydroxymethyltransferase (418 aa).

(6S)-5,6,7,8-tetrahydrofolate contacts are provided by residues leucine 118 and 122-124; that span reads GHL. Lysine 227 is modified (N6-(pyridoxal phosphate)lysine). Glutamate 242 serves as a coordination point for (6S)-5,6,7,8-tetrahydrofolate.

The protein belongs to the SHMT family. Homodimer. It depends on pyridoxal 5'-phosphate as a cofactor.

The protein resides in the cytoplasm. It carries out the reaction (6R)-5,10-methylene-5,6,7,8-tetrahydrofolate + glycine + H2O = (6S)-5,6,7,8-tetrahydrofolate + L-serine. It participates in one-carbon metabolism; tetrahydrofolate interconversion. It functions in the pathway amino-acid biosynthesis; glycine biosynthesis; glycine from L-serine: step 1/1. Its function is as follows. Catalyzes the reversible interconversion of serine and glycine with tetrahydrofolate (THF) serving as the one-carbon carrier. This reaction serves as the major source of one-carbon groups required for the biosynthesis of purines, thymidylate, methionine, and other important biomolecules. Also exhibits THF-independent aldolase activity toward beta-hydroxyamino acids, producing glycine and aldehydes, via a retro-aldol mechanism. This chain is Serine hydroxymethyltransferase, found in Chloroflexus aggregans (strain MD-66 / DSM 9485).